The sequence spans 415 residues: tRNA(Met) cytidine acetate ligase (415 aa).

ATP contacts are provided by residues 7–20, glycine 102, asparagine 165, and 190–191; these read IVEY…HLYH and RI.

Belongs to the TmcAL family.

Its subcellular location is the cytoplasm. The enzyme catalyses cytidine(34) in elongator tRNA(Met) + acetate + ATP = N(4)-acetylcytidine(34) in elongator tRNA(Met) + AMP + diphosphate. Functionally, catalyzes the formation of N(4)-acetylcytidine (ac(4)C) at the wobble position of elongator tRNA(Met), using acetate and ATP as substrates. First activates an acetate ion to form acetyladenylate (Ac-AMP) and then transfers the acetyl group to tRNA to form ac(4)C34. The sequence is that of tRNA(Met) cytidine acetate ligase from Acetivibrio thermocellus (strain ATCC 27405 / DSM 1237 / JCM 9322 / NBRC 103400 / NCIMB 10682 / NRRL B-4536 / VPI 7372) (Clostridium thermocellum).